A 571-amino-acid polypeptide reads, in one-letter code: Acetolactate synthase large subunit (571 aa).

A thiamine diphosphate-binding site is contributed by E51. Residues R153, 261–282 (HGTY…IGVR), and 304–323 (DIDP…IVGD) each bind FAD. A thiamine pyrophosphate binding region spans residues 394-474 (QHQMFTALYY…VLILNLNNSS (81 aa)). Positions 445 and 472 each coordinate Mg(2+).

Belongs to the TPP enzyme family. Dimer of large and small chains. Requires Mg(2+) as cofactor. Thiamine diphosphate serves as cofactor.

The catalysed reaction is 2 pyruvate + H(+) = (2S)-2-acetolactate + CO2. It participates in amino-acid biosynthesis; L-isoleucine biosynthesis; L-isoleucine from 2-oxobutanoate: step 1/4. Its pathway is amino-acid biosynthesis; L-valine biosynthesis; L-valine from pyruvate: step 1/4. The sequence is that of Acetolactate synthase large subunit (ilvI) from Buchnera aphidicola subsp. Acyrthosiphon pisum (strain APS) (Acyrthosiphon pisum symbiotic bacterium).